A 347-amino-acid polypeptide reads, in one-letter code: Chlorophyllase type 0 (347 aa).

The N-terminal stretch at 1–19 (MAKLLLLIFGVFIFVNSQA) is a signal peptide. Positions 20–30 (QTFPTILEKHN) are excised as a propeptide. The short motif at 160 to 164 (GHSRG) is the GXSXG element. S162 functions as the Nucleophile in the catalytic mechanism. Catalysis depends on D191, which acts as the Charge relay system. N-linked (GlcNAc...) asparagine glycosylation is found at N215, N229, and N251. H262 acts as the Charge relay system in catalysis. A glycan (N-linked (GlcNAc...) asparagine) is linked at N321.

This sequence belongs to the AB hydrolase superfamily. Lipase family.

The enzyme catalyses a chlorophyll + H2O = a chlorophyllide + phytol + H(+). It catalyses the reaction chlorophyll a + H2O = phytol + chlorophyllide a + H(+). The protein operates within porphyrin-containing compound metabolism; chlorophyll degradation. Inhibited by diisopropyl fluorophosphate (DFP), phenylmethanesulfonyl fluoride (PMSF) or p-chloromercuribenzoic acid (PCMB), but not by N-ethylmaleimide (NEM) or iodoacetamide. In terms of biological role, catalyzes the hydrolysis of ester bond in chlorophyll to yield chlorophyllide and phytol. This chain is Chlorophyllase type 0, found in Chenopodium album (Fat hen).